Here is a 373-residue protein sequence, read N- to C-terminus: MPLINLPEFASDLLAEFDARKVERIDTPVIQPAEPFLDIAGEDLRRRIFMTESETGASLCLRPEFTIPVCLRHIETATGTPKRYAYLGEVFRQRRDGANEFYQAGIEDLGDINIPSADARAIGDATGILARLLPGRRLSVTLGDQAVFEAVVQALGLPLGWQKRLIHAFGNMTQLEALLAGLVSPQFVTGLDDDVAKLVASGDEQALVSHLEQEMQATGYSANAGRSPLEIARRLKEKLILSETRLDDAAFHVLEEFLSLDVPLVNASAALAGFADAAGLKLGNALSRFNGRVAALADAGVDLSCLDYRAAFGRPLDYYTGLVFEVTVEGSAAVLAGGGRFDKLLTFLGATDRIPAVGFSFWLDRIETERAAV.

The protein belongs to the class-II aminoacyl-tRNA synthetase family. HisZ subfamily. As to quaternary structure, heteromultimer composed of HisG and HisZ subunits.

The protein localises to the cytoplasm. It functions in the pathway amino-acid biosynthesis; L-histidine biosynthesis; L-histidine from 5-phospho-alpha-D-ribose 1-diphosphate: step 1/9. In terms of biological role, required for the first step of histidine biosynthesis. May allow the feedback regulation of ATP phosphoribosyltransferase activity by histidine. The sequence is that of ATP phosphoribosyltransferase regulatory subunit from Rhizobium leguminosarum bv. trifolii (strain WSM2304).